The primary structure comprises 432 residues: Cyclic 2,3-diphosphoglycerate synthetase (432 aa).

Belongs to the cyclic 2,3-diphosphoglycerate synthetase family.

The protein localises to the cytoplasm. It carries out the reaction (2R)-2,3-bisphosphoglycerate + ATP + H(+) = cyclic (2R)-2,3-bisphosphoglycerate + ADP + phosphate. Functionally, catalyzes the formation of cyclic 2,3-diphosphoglycerate (cDPG) by formation of an intramolecular phosphoanhydride bond at the expense of ATP. This Thermococcus onnurineus (strain NA1) protein is Cyclic 2,3-diphosphoglycerate synthetase.